The primary structure comprises 719 residues: Delta-1-pyrroline-5-carboxylate synthase (719 aa).

Residues 1 to 293 are glutamate 5-kinase; sequence MDATRAFVKD…WVQVKETGVR (293 aa). Substrate is bound by residues S57, D154, and N173. Residues 193–194 and 233–239 contribute to the ATP site; these read SD and RGGMTAK. Residues 294–719 form a gamma-glutamyl phosphate reductase region; sequence DMAVAARESS…KDLPLVAQNS (426 aa).

In the N-terminal section; belongs to the glutamate 5-kinase family. This sequence in the C-terminal section; belongs to the gamma-glutamyl phosphate reductase family. In terms of tissue distribution, expressed at high levels in leaves and is inducible in roots subjected to salt stress.

It carries out the reaction L-glutamate + ATP = L-glutamyl 5-phosphate + ADP. The enzyme catalyses L-glutamate 5-semialdehyde + phosphate + NADP(+) = L-glutamyl 5-phosphate + NADPH + H(+). Its pathway is amino-acid biosynthesis; L-proline biosynthesis; L-glutamate 5-semialdehyde from L-glutamate: step 1/2. It participates in amino-acid biosynthesis; L-proline biosynthesis; L-glutamate 5-semialdehyde from L-glutamate: step 2/2. Its activity is regulated as follows. Feedback regulated by proline. In terms of biological role, P5CS plays a key role in proline biosynthesis, leading to osmoregulation in plants. The polypeptide is Delta-1-pyrroline-5-carboxylate synthase (P5CS) (Mesembryanthemum crystallinum (Common ice plant)).